The chain runs to 188 residues: Ribosome maturation factor RimM (188 aa).

Positions 96 to 169 (DDEFYYADLE…TLLIDPLAAG (74 aa)) constitute a PRC barrel domain.

It belongs to the RimM family. In terms of assembly, binds ribosomal protein uS19.

It localises to the cytoplasm. Its function is as follows. An accessory protein needed during the final step in the assembly of 30S ribosomal subunit, possibly for assembly of the head region. Essential for efficient processing of 16S rRNA. May be needed both before and after RbfA during the maturation of 16S rRNA. It has affinity for free ribosomal 30S subunits but not for 70S ribosomes. The chain is Ribosome maturation factor RimM from Rhizobium etli (strain ATCC 51251 / DSM 11541 / JCM 21823 / NBRC 15573 / CFN 42).